A 274-amino-acid polypeptide reads, in one-letter code: Methionine-binding lipoprotein MetQ (274 aa).

The signal sequence occupies residues 1 to 19; sequence MKKLFLGALLLVFAGVMAA. Cysteine 20 carries N-palmitoyl cysteine lipidation. The S-diacylglycerol cysteine moiety is linked to residue cysteine 20.

It belongs to the NlpA lipoprotein family. In terms of assembly, the complex is composed of two ATP-binding proteins (MetN), two transmembrane proteins (MetP) and a solute-binding protein (metQ).

The protein resides in the cell membrane. In terms of biological role, part of the ABC transporter complex MetNPQ involved in methionine import. Binds the methionine and transfers it to the membrane-bound permease. It has also been shown to be involved in methionine sulfoxide transport. The protein is Methionine-binding lipoprotein MetQ (metQ) of Bacillus subtilis (strain 168).